We begin with the raw amino-acid sequence, 430 residues long: Ribosomal protein uS12 methylthiotransferase RimO (430 aa).

The MTTase N-terminal domain maps to 1-116; it reads MKIGIKVLGC…IAEAIEKATP (116 aa). Residues Cys10, Cys46, Cys79, Cys146, Cys150, and Cys153 each coordinate [4Fe-4S] cluster. Residues 132-362 form the Radical SAM core domain; the sequence is SCNNSFAYVK…LIFQSQIAYE (231 aa). The region spanning 365-430 is the TRAM domain; it reads KRFVGKNLNV…DEYDLKGELI (66 aa).

Belongs to the methylthiotransferase family. RimO subfamily. [4Fe-4S] cluster is required as a cofactor.

The protein resides in the cytoplasm. It carries out the reaction L-aspartate(89)-[ribosomal protein uS12]-hydrogen + (sulfur carrier)-SH + AH2 + 2 S-adenosyl-L-methionine = 3-methylsulfanyl-L-aspartate(89)-[ribosomal protein uS12]-hydrogen + (sulfur carrier)-H + 5'-deoxyadenosine + L-methionine + A + S-adenosyl-L-homocysteine + 2 H(+). Catalyzes the methylthiolation of an aspartic acid residue of ribosomal protein uS12. The sequence is that of Ribosomal protein uS12 methylthiotransferase RimO from Pseudothermotoga lettingae (strain ATCC BAA-301 / DSM 14385 / NBRC 107922 / TMO) (Thermotoga lettingae).